A 222-amino-acid chain; its full sequence is Ribose-5-phosphate isomerase A (222 aa).

Residues Thr-28–Thr-31, Asp-81–Asp-84, and Lys-94–Gly-97 contribute to the substrate site. The Proton acceptor role is filled by Glu-103. Lys-121 is a binding site for substrate.

The protein belongs to the ribose 5-phosphate isomerase family. Homodimer.

The enzyme catalyses aldehydo-D-ribose 5-phosphate = D-ribulose 5-phosphate. It functions in the pathway carbohydrate degradation; pentose phosphate pathway; D-ribose 5-phosphate from D-ribulose 5-phosphate (non-oxidative stage): step 1/1. In terms of biological role, catalyzes the reversible conversion of ribose-5-phosphate to ribulose 5-phosphate. The protein is Ribose-5-phosphate isomerase A of Azoarcus sp. (strain BH72).